Reading from the N-terminus, the 464-residue chain is Asparagine--tRNA ligase (464 aa).

It belongs to the class-II aminoacyl-tRNA synthetase family. As to quaternary structure, homodimer.

It localises to the cytoplasm. The catalysed reaction is tRNA(Asn) + L-asparagine + ATP = L-asparaginyl-tRNA(Asn) + AMP + diphosphate + H(+). This chain is Asparagine--tRNA ligase, found in Cytophaga hutchinsonii (strain ATCC 33406 / DSM 1761 / CIP 103989 / NBRC 15051 / NCIMB 9469 / D465).